Consider the following 340-residue polypeptide: Cytochrome c oxidase subunit 1 (340 aa).

The chain crosses the membrane as a helical span at residues 18-38; it reads MCYLLVAILCGFLGYIYSLFI. Glutamate 41 and glycine 46 together coordinate Ca(2+). A helical membrane pass occupies residues 42-62; that stretch reads LSIIGCGVLFGDYQYYNVLVT. A Fe(II)-heme a-binding site is contributed by histidine 64. 7 helical membrane-spanning segments follow: residues 66-86, 100-120, 148-168, 186-206, 237-257, 279-299, and 305-325; these read LVMV…NYFV, LNNM…SGLL, FTVF…INLL, LFIW…PVLA, LFWF…FGLI, MILI…VVGM, and AYFG…LFNW. Residue histidine 243 participates in Cu cation binding. The 1'-histidyl-3'-tyrosine (His-Tyr) cross-link spans 243–247; that stretch reads HPEVY. Tyrosine 247 lines the O2 pocket. Residues histidine 292 and histidine 293 each coordinate Cu cation.

It belongs to the heme-copper respiratory oxidase family. In terms of assembly, component of the cytochrome c oxidase (complex IV, CIV), a multisubunit enzyme composed of a catalytic core of 3 subunits and several supernumerary subunits. The complex exists as a monomer or a dimer and forms supercomplexes (SCs) in the inner mitochondrial membrane with ubiquinol-cytochrome c oxidoreductase (cytochrome b-c1 complex, complex III, CIII). The cofactor is heme. Cu cation serves as cofactor.

Its subcellular location is the mitochondrion inner membrane. The catalysed reaction is 4 Fe(II)-[cytochrome c] + O2 + 8 H(+)(in) = 4 Fe(III)-[cytochrome c] + 2 H2O + 4 H(+)(out). Its pathway is energy metabolism; oxidative phosphorylation. Functionally, component of the cytochrome c oxidase, the last enzyme in the mitochondrial electron transport chain which drives oxidative phosphorylation. The respiratory chain contains 3 multisubunit complexes succinate dehydrogenase (complex II, CII), ubiquinol-cytochrome c oxidoreductase (cytochrome b-c1 complex, complex III, CIII) and cytochrome c oxidase (complex IV, CIV), that cooperate to transfer electrons derived from NADH and succinate to molecular oxygen, creating an electrochemical gradient over the inner membrane that drives transmembrane transport and the ATP synthase. Cytochrome c oxidase is the component of the respiratory chain that catalyzes the reduction of oxygen to water. Electrons originating from reduced cytochrome c in the intermembrane space (IMS) are transferred via the dinuclear copper A center (CU(A)) of subunit 2 and heme A of subunit 1 to the active site in subunit 1, a binuclear center (BNC) formed by heme A3 and copper B (CU(B)). The BNC reduces molecular oxygen to 2 water molecules using 4 electrons from cytochrome c in the IMS and 4 protons from the mitochondrial matrix. This chain is Cytochrome c oxidase subunit 1 (COI), found in Strigomonas oncopelti (Parasitic flagellate).